The following is a 191-amino-acid chain: Salivary lipocalin (191 aa).

The N-terminal stretch at 1 to 16 is a signal peptide; the sequence is MKLLLLLCLGLTLASS. Asparagine 69 carries N-linked (GlcNAc...) asparagine glycosylation. Cysteine 84 and cysteine 176 are oxidised to a cystine.

The protein belongs to the calycin superfamily. Lipocalin family. As to quaternary structure, homodimer. In terms of tissue distribution, in the submaxillary salivary glands of mature male pigs, but absent from that of females. Expression was much lower in submaxillary glands of castrated male pigs than in sexually mature individuals.

Its subcellular location is the secreted. Binds pheromones, the pheromones are released from the saliva of males and affect the sexual behavior of females. This is Salivary lipocalin (SAL1) from Sus scrofa (Pig).